The following is a 240-amino-acid chain: MAQISKYKRVVLKLSGEALAGEKGFGINPVIIKSVAEQVAEVAKMDCEIAVIVGGGNIWRGKTGSDLGMDRGTADYMGMLATVMNALALQDSLEQLDCDTRVLTSIEMKQVAEPYIRRRAIRHLEKKRVVIFAAGIGNPYFSTDTTAALRAAEVEADVILMGKNNVDGVYSADPKVNKDAVKYEHLTHIQMLQEGLQVMDSTASSFCMDNNIPLTVFSIMEEGNIKRAVMGEKIGTLITK.

Residue 13–16 coordinates ATP; that stretch reads KLSG. Positions 21 to 26 are involved in allosteric activation by GTP; sequence GEKGFG. UMP is bound at residue G55. ATP contacts are provided by G56 and R60. UMP is bound by residues D75 and 136-143; that span reads IGNPYFST. ATP is bound by residues N164, Y170, and D173.

It belongs to the UMP kinase family. As to quaternary structure, homohexamer.

The protein resides in the cytoplasm. The catalysed reaction is UMP + ATP = UDP + ADP. Its pathway is pyrimidine metabolism; CTP biosynthesis via de novo pathway; UDP from UMP (UMPK route): step 1/1. With respect to regulation, allosterically activated by GTP. Inhibited by UTP. Functionally, catalyzes the reversible phosphorylation of UMP to UDP. The polypeptide is Uridylate kinase (Staphylococcus aureus (strain USA300)).